The chain runs to 408 residues: Zinc finger and SCAN domain-containing protein 1 (408 aa).

Residues 1–34 (MLPRPKAPASPRRPQTPTPSEQDADPGPASPRDT) form a disordered region. The 83-residue stretch at 38 to 120 (RLRFRQFQYH…SLVEDLTQMC (83 aa)) folds into the SCAN box domain. Disordered regions lie at residues 136–155 (WSFGEEEDGKSPRSQKEPSQ), 177–203 (LETTQLQQSLHTRAEAEAPRAPGLLGS), and 215–273 (DEPE…GGTQ). Residues 177 to 187 (LETTQLQQSLH) are compositionally biased toward polar residues. 2 consecutive C2H2-type zinc fingers follow at residues 292–314 (FQCADCGMVFTWVTHFIEHQKTH) and 320–342 (FPCPECGKVFLHNSVLTEHGKIH). The tract at residues 344–379 (LEPPRKKAPRSKGPRESVPPRDGAQGPVAPRSPKRP) is disordered. Residues 380–402 (FQCSVCGKAFPWMVHLIDHQKLH) form a C2H2-type 3 zinc finger.

The protein localises to the nucleus. May be involved in transcriptional regulation. The polypeptide is Zinc finger and SCAN domain-containing protein 1 (ZSCAN1) (Homo sapiens (Human)).